The chain runs to 251 residues: Tyrosine transport ATP-binding protein (251 aa).

The region spanning 2 to 248 (LQIKNLSKSF…TVEEILEKFE (247 aa)) is the ABC transporter domain. ATP is bound at residue 39–46 (GSNGTGKS).

The protein belongs to the ABC transporter superfamily. As to quaternary structure, the complex is probably composed of two ATP-binding proteins (CDR20291_0806), two transmembrane proteins (CDR20291_0807) and a solute-binding protein (CDR20291_0805).

The protein resides in the cell membrane. The catalysed reaction is L-tyrosine(out) + ATP + H2O = L-tyrosine(in) + ADP + phosphate + H(+). Functionally, probably part of an ABC transporter complex involved in tyrosine uptake. May also import phenylalanine. Probably responsible for energy coupling to the transport system. This chain is Tyrosine transport ATP-binding protein, found in Clostridioides difficile (strain R20291) (Peptoclostridium difficile).